Consider the following 467-residue polypeptide: UDP-N-acetylmuramate--L-alanine ligase (467 aa).

114-120 (GTHGKTT) is an ATP binding site.

This sequence belongs to the MurCDEF family.

It is found in the cytoplasm. The enzyme catalyses UDP-N-acetyl-alpha-D-muramate + L-alanine + ATP = UDP-N-acetyl-alpha-D-muramoyl-L-alanine + ADP + phosphate + H(+). Its pathway is cell wall biogenesis; peptidoglycan biosynthesis. Its function is as follows. Cell wall formation. This is UDP-N-acetylmuramate--L-alanine ligase from Bradyrhizobium diazoefficiens (strain JCM 10833 / BCRC 13528 / IAM 13628 / NBRC 14792 / USDA 110).